We begin with the raw amino-acid sequence, 357 residues long: D-alanine--D-alanine ligase (357 aa).

An ATP-grasp domain is found at 145–339; the sequence is KEVMLYHGIQ…YGDLVMDIVN (195 aa). Position 172 to 225 (172 to 225) interacts with ATP; the sequence is PFDFPVVVKPTSGGSSVGTHIIHNQEELESGLEDVFRFDNSAIVEEFTPGREFS. Mg(2+)-binding residues include D294, E306, and N308.

It belongs to the D-alanine--D-alanine ligase family. Requires Mg(2+) as cofactor. It depends on Mn(2+) as a cofactor.

The protein resides in the cytoplasm. It carries out the reaction 2 D-alanine + ATP = D-alanyl-D-alanine + ADP + phosphate + H(+). The protein operates within cell wall biogenesis; peptidoglycan biosynthesis. In terms of biological role, cell wall formation. This Lacticaseibacillus paracasei (strain ATCC 334 / BCRC 17002 / CCUG 31169 / CIP 107868 / KCTC 3260 / NRRL B-441) (Lactobacillus paracasei) protein is D-alanine--D-alanine ligase.